The sequence spans 472 residues: Trigger factor (472 aa).

A PPIase FKBP-type domain is found at 174 to 261 (GDIALVSFKG…LEDLKIKELP (88 aa)). The segment at 438–472 (EKTPEKARDQIKEKSSKKKTTKTNKEKKSSKTPKS) is disordered. The span at 439–451 (KTPEKARDQIKEK) shows a compositional bias: basic and acidic residues.

It belongs to the FKBP-type PPIase family. Tig subfamily.

Its subcellular location is the cytoplasm. The catalysed reaction is [protein]-peptidylproline (omega=180) = [protein]-peptidylproline (omega=0). Its function is as follows. Involved in protein export. Acts as a chaperone by maintaining the newly synthesized protein in an open conformation. Functions as a peptidyl-prolyl cis-trans isomerase. This chain is Trigger factor, found in Prochlorococcus marinus (strain NATL2A).